The sequence spans 556 residues: DNA ligase B (556 aa).

The active-site N6-AMP-lysine intermediate is the lysine 124.

Belongs to the NAD-dependent DNA ligase family. LigB subfamily.

The catalysed reaction is NAD(+) + (deoxyribonucleotide)n-3'-hydroxyl + 5'-phospho-(deoxyribonucleotide)m = (deoxyribonucleotide)n+m + AMP + beta-nicotinamide D-nucleotide.. In terms of biological role, catalyzes the formation of phosphodiester linkages between 5'-phosphoryl and 3'-hydroxyl groups in double-stranded DNA using NAD as a coenzyme and as the energy source for the reaction. In Pseudomonas fluorescens (strain ATCC BAA-477 / NRRL B-23932 / Pf-5), this protein is DNA ligase B.